The primary structure comprises 543 residues: 2,3-bisphosphoglycerate-independent phosphoglycerate mutase (543 aa).

Residues D24 and S74 each contribute to the Mn(2+) site. S74 functions as the Phosphoserine intermediate in the catalytic mechanism. Substrate-binding positions include H135, 165–166, R197, R203, 268–271, and K341; these read RD and RPDR. D408, H412, D449, H450, and H467 together coordinate Mn(2+).

Belongs to the BPG-independent phosphoglycerate mutase family. As to quaternary structure, monomer. Mn(2+) serves as cofactor.

The catalysed reaction is (2R)-2-phosphoglycerate = (2R)-3-phosphoglycerate. Its pathway is carbohydrate degradation; glycolysis; pyruvate from D-glyceraldehyde 3-phosphate: step 3/5. Functionally, catalyzes the interconversion of 2-phosphoglycerate and 3-phosphoglycerate. This is 2,3-bisphosphoglycerate-independent phosphoglycerate mutase from Parasynechococcus marenigrum (strain WH8102).